The chain runs to 185 residues: Elongation factor P (185 aa).

The protein belongs to the elongation factor P family.

It is found in the cytoplasm. Its pathway is protein biosynthesis; polypeptide chain elongation. Its function is as follows. Involved in peptide bond synthesis. Stimulates efficient translation and peptide-bond synthesis on native or reconstituted 70S ribosomes in vitro. Probably functions indirectly by altering the affinity of the ribosome for aminoacyl-tRNA, thus increasing their reactivity as acceptors for peptidyl transferase. This is Elongation factor P from Endomicrobium trichonymphae.